The primary structure comprises 317 residues: Exopolysaccharide production protein ExoZ (317 aa).

7 helical membrane-spanning segments follow: residues 14 to 34, 53 to 73, 100 to 120, 132 to 152, 185 to 205, 206 to 226, and 268 to 288; these read TIGAAGVDVFFVISGFIMWVI, IVPVYWLATGVMVAGALAGLF, IWPVLVQGWTLNFEMLFYAVF, LPVVSGLFLALVIAGRVVAFD, LAVGSALFACSLGGFALIGVL, GLPFDELTTGPLAVLLVIGVL, and IGLGAPATMFAAVLSGTLIGI.

The protein belongs to the acyltransferase 3 family.

It is found in the cell membrane. Its function is as follows. Required for the acetyl modification of the third sugar (glucose) of the octasaccharide subunit of succinoglycan (EPS I). In Rhizobium meliloti (strain 1021) (Ensifer meliloti), this protein is Exopolysaccharide production protein ExoZ (exoZ).